A 159-amino-acid polypeptide reads, in one-letter code: 2-C-methyl-D-erythritol 2,4-cyclodiphosphate synthase (159 aa).

A divalent metal cation contacts are provided by D9 and H11. Residues 9–11 (DVH) and 35–36 (HS) each bind 4-CDP-2-C-methyl-D-erythritol 2-phosphate. H43 is an a divalent metal cation binding site. 4-CDP-2-C-methyl-D-erythritol 2-phosphate-binding positions include 57-59 (DIG), 62-66 (FPDTD), 133-136 (TTTE), F140, and R143.

The protein belongs to the IspF family. As to quaternary structure, homotrimer. The cofactor is a divalent metal cation.

It catalyses the reaction 4-CDP-2-C-methyl-D-erythritol 2-phosphate = 2-C-methyl-D-erythritol 2,4-cyclic diphosphate + CMP. It participates in isoprenoid biosynthesis; isopentenyl diphosphate biosynthesis via DXP pathway; isopentenyl diphosphate from 1-deoxy-D-xylulose 5-phosphate: step 4/6. Functionally, involved in the biosynthesis of isopentenyl diphosphate (IPP) and dimethylallyl diphosphate (DMAPP), two major building blocks of isoprenoid compounds. Catalyzes the conversion of 4-diphosphocytidyl-2-C-methyl-D-erythritol 2-phosphate (CDP-ME2P) to 2-C-methyl-D-erythritol 2,4-cyclodiphosphate (ME-CPP) with a corresponding release of cytidine 5-monophosphate (CMP). The chain is 2-C-methyl-D-erythritol 2,4-cyclodiphosphate synthase from Mannheimia succiniciproducens (strain KCTC 0769BP / MBEL55E).